A 122-amino-acid polypeptide reads, in one-letter code: Small ribosomal subunit protein uS13 (122 aa).

The tract at residues 95 to 122 (GLPVHGQRTHTNARTRKGPRKGAVGKKK) is disordered.

It belongs to the universal ribosomal protein uS13 family. In terms of assembly, part of the 30S ribosomal subunit. Forms a loose heterodimer with protein S19. Forms two bridges to the 50S subunit in the 70S ribosome.

Located at the top of the head of the 30S subunit, it contacts several helices of the 16S rRNA. In the 70S ribosome it contacts the 23S rRNA (bridge B1a) and protein L5 of the 50S subunit (bridge B1b), connecting the 2 subunits; these bridges are implicated in subunit movement. Contacts the tRNAs in the A and P-sites. The polypeptide is Small ribosomal subunit protein uS13 (Lawsonia intracellularis (strain PHE/MN1-00)).